The chain runs to 111 residues: Large ribosomal subunit protein uL22 (111 aa).

It belongs to the universal ribosomal protein uL22 family. Part of the 50S ribosomal subunit.

Its function is as follows. This protein binds specifically to 23S rRNA; its binding is stimulated by other ribosomal proteins, e.g. L4, L17, and L20. It is important during the early stages of 50S assembly. It makes multiple contacts with different domains of the 23S rRNA in the assembled 50S subunit and ribosome. The globular domain of the protein is located near the polypeptide exit tunnel on the outside of the subunit, while an extended beta-hairpin is found that lines the wall of the exit tunnel in the center of the 70S ribosome. The polypeptide is Large ribosomal subunit protein uL22 (Xanthomonas euvesicatoria pv. vesicatoria (strain 85-10) (Xanthomonas campestris pv. vesicatoria)).